The primary structure comprises 165 residues: Large ribosomal subunit protein uL5 (165 aa).

The protein belongs to the universal ribosomal protein uL5 family. Part of the 50S ribosomal subunit; contacts the 5S rRNA and probably tRNA. Forms a bridge to the 30S subunit in the 70S ribosome.

Functionally, this is one of the proteins that bind and probably mediate the attachment of the 5S RNA into the large ribosomal subunit, where it forms part of the central protuberance. In the 70S ribosome it contacts protein S13 of the 30S subunit (bridge B1b), connecting the 2 subunits; this bridge is implicated in subunit movement. May contact the P site tRNA; the 5S rRNA and some of its associated proteins might help stabilize positioning of ribosome-bound tRNAs. This is Large ribosomal subunit protein uL5 from Methanoregula boonei (strain DSM 21154 / JCM 14090 / 6A8).